The chain runs to 265 residues: Sarcotoxin II-1 (265 aa).

The N-terminal stretch at 1–22 (MKSFVLFAACMAIIALGSLAHA) is a signal peptide. Positions 23 to 24 (YP) are cleaved as a propeptide — removed by a dipeptidylpeptidase. Residue Q25 is modified to Pyrrolidone carboxylic acid. Residue G264 is modified to Glycine amide.

This sequence belongs to the attacin/sarcotoxin-2 family. Synthesized by the fat body and is eventually secreted into the hemolymph.

The protein resides in the secreted. In terms of biological role, sarcotoxin II is an antibacterial protein which plays a role in the inflammatory response of this insect. The main effect of sarcotoxin II on E.coli may be the inhibition of cell wall synthesis, including septum formation. This is Sarcotoxin II-1 from Sarcophaga peregrina (Flesh fly).